The primary structure comprises 88 residues: Small ribosomal subunit protein bS20 (88 aa).

2 disordered regions span residues 1 to 22 and 69 to 88; these read MPNI…AQNA and KNAA…GLSA.

Belongs to the bacterial ribosomal protein bS20 family.

Binds directly to 16S ribosomal RNA. The polypeptide is Small ribosomal subunit protein bS20 (Shouchella clausii (strain KSM-K16) (Alkalihalobacillus clausii)).